We begin with the raw amino-acid sequence, 206 residues long: Ribosomal RNA small subunit methyltransferase G (206 aa).

S-adenosyl-L-methionine-binding positions include Gly-74, Leu-79, 125–126, and Arg-140; that span reads VE.

This sequence belongs to the methyltransferase superfamily. RNA methyltransferase RsmG family.

The protein localises to the cytoplasm. The enzyme catalyses guanosine(527) in 16S rRNA + S-adenosyl-L-methionine = N(7)-methylguanosine(527) in 16S rRNA + S-adenosyl-L-homocysteine. Functionally, specifically methylates the N7 position of guanine in position 527 of 16S rRNA. The polypeptide is Ribosomal RNA small subunit methyltransferase G (Shewanella baltica (strain OS223)).